The following is a 109-amino-acid chain: Probable guanidinium efflux system subunit GdnC (109 aa).

The next 4 membrane-spanning stretches (helical) occupy residues 3 to 23, 26 to 46, 55 to 75, and 81 to 101; these read WGSV…LKHA, ALEW…LVKA, VYAV…IALF, and IAKL…KLVT.

This sequence belongs to the drug/metabolite transporter (DMT) superfamily. Small multidrug resistance (SMR) (TC 2.A.7.1) family. YkkC/YkkD subfamily. As to quaternary structure, the efflux pump is composed of GdnC and GdnD.

It localises to the cell membrane. Functionally, probably involved in guanidinium transport. This Bacillus licheniformis (strain ATCC 14580 / DSM 13 / JCM 2505 / CCUG 7422 / NBRC 12200 / NCIMB 9375 / NCTC 10341 / NRRL NRS-1264 / Gibson 46) protein is Probable guanidinium efflux system subunit GdnC.